Consider the following 274-residue polypeptide: Penicillin-insensitive murein endopeptidase (274 aa).

The N-terminal stretch at 1 to 19 (MNKTAIALLALLASSASLA) is a signal peptide. Intrachain disulfides connect Cys44–Cys265, Cys187–Cys235, and Cys216–Cys223. Residues His110, His113, Asp120, Asp147, His150, and His211 each contribute to the Zn(2+) site. The interval 227–274 (PLPPPGDGCGAELQSWFEPPKPGTTKPEKKTPPPLPPSCQALLDEHVI) is disordered.

Belongs to the peptidase M74 family. As to quaternary structure, dimer. Requires Zn(2+) as cofactor.

The protein resides in the periplasm. Its function is as follows. Murein endopeptidase that cleaves the D-alanyl-meso-2,6-diamino-pimelyl amide bond that connects peptidoglycan strands. Likely plays a role in the removal of murein from the sacculus. In Escherichia coli O1:K1 / APEC, this protein is Penicillin-insensitive murein endopeptidase.